The sequence spans 102 residues: NADH-quinone oxidoreductase subunit K (102 aa).

A run of 3 helical transmembrane segments spans residues 5–25 (LEHYLTVAAILFTLGIFGIFL), 31–51 (IVILMSIELMLLAVNINLVAF), and 66–86 (FVLTVAAAEAAIGLAILVVFF).

It belongs to the complex I subunit 4L family. NDH-1 is composed of 14 different subunits. Subunits NuoA, H, J, K, L, M, N constitute the membrane sector of the complex.

The protein localises to the cell inner membrane. It carries out the reaction a quinone + NADH + 5 H(+)(in) = a quinol + NAD(+) + 4 H(+)(out). Functionally, NDH-1 shuttles electrons from NADH, via FMN and iron-sulfur (Fe-S) centers, to quinones in the respiratory chain. The immediate electron acceptor for the enzyme in this species is believed to be ubiquinone. Couples the redox reaction to proton translocation (for every two electrons transferred, four hydrogen ions are translocated across the cytoplasmic membrane), and thus conserves the redox energy in a proton gradient. In Parvibaculum lavamentivorans (strain DS-1 / DSM 13023 / NCIMB 13966), this protein is NADH-quinone oxidoreductase subunit K.